The following is a 1088-amino-acid chain: Receptor-type guanylate cyclase gcy-17 (1088 aa).

An N-terminal signal peptide occupies residues 1 to 20; it reads MLFLRLFIFTPFLILANCQA. Residues 21–480 are Extracellular-facing; sequence RRTIKVGLLF…PPDFVRDYLV (460 aa). Residues asparagine 33, asparagine 235, asparagine 251, asparagine 321, asparagine 381, asparagine 419, and asparagine 434 are each glycosylated (N-linked (GlcNAc...) asparagine). Residues 481–501 traverse the membrane as a helical segment; that stretch reads IVIIIVMFLIFAVSAAVGAVF. At 502 to 1088 the chain is on the cytoplasmic side; that stretch reads YAIRQKRKEI…SMARSITPEI (587 aa). The interval 529-552 is disordered; it reads SKKSKSEASQRSFASGPSTSTKLT. The segment covering 535 to 552 has biased composition (polar residues); sequence EASQRSFASGPSTSTKLT. The 290-residue stretch at 535–824 folds into the Protein kinase domain; the sequence is EASQRSFASG…KGNLMDHVFN (290 aa). The stretch at 826–854 forms a coiled coil; the sequence is LETYASTLEEEVNERTKELVEEQKKSDVL. The Guanylate cyclase domain occupies 882–1012; the sequence is TIFFSDVVQF…DAVNTASRME (131 aa). Positions 1069–1088 are disordered; that stretch reads SNMRKRENTPSMARSITPEI.

Belongs to the adenylyl cyclase class-4/guanylyl cyclase family. Expressed in PHA sensory neurons.

It is found in the cell membrane. It carries out the reaction GTP = 3',5'-cyclic GMP + diphosphate. Functionally, guanylate cyclase involved in the production of the second messenger cGMP. The sequence is that of Receptor-type guanylate cyclase gcy-17 from Caenorhabditis elegans.